The following is a 130-amino-acid chain: Large ribosomal subunit protein bL12 (130 aa).

It belongs to the bacterial ribosomal protein bL12 family. Homodimer. Part of the ribosomal stalk of the 50S ribosomal subunit. Forms a multimeric L10(L12)X complex, where L10 forms an elongated spine to which 2 to 4 L12 dimers bind in a sequential fashion. Binds GTP-bound translation factors.

In terms of biological role, forms part of the ribosomal stalk which helps the ribosome interact with GTP-bound translation factors. Is thus essential for accurate translation. The chain is Large ribosomal subunit protein bL12 from Prochlorococcus marinus (strain SARG / CCMP1375 / SS120).